A 96-amino-acid chain; its full sequence is Small ribosomal subunit protein bS6 (96 aa).

Belongs to the bacterial ribosomal protein bS6 family.

In terms of biological role, binds together with bS18 to 16S ribosomal RNA. The protein is Small ribosomal subunit protein bS6 of Gloeobacter violaceus (strain ATCC 29082 / PCC 7421).